Here is a 270-residue protein sequence, read N- to C-terminus: 4-hydroxy-tetrahydrodipicolinate reductase (270 aa).

NAD(+) is bound by residues 8–13, D34, 102–104, and 128–131; these read GALGRM, GTT, and SQNY. The active-site Proton donor/acceptor is H160. H161 is a binding site for (S)-2,3,4,5-tetrahydrodipicolinate. K164 (proton donor) is an active-site residue. 170–171 provides a ligand contact to (S)-2,3,4,5-tetrahydrodipicolinate; sequence GT.

Belongs to the DapB family.

The protein localises to the cytoplasm. The catalysed reaction is (S)-2,3,4,5-tetrahydrodipicolinate + NAD(+) + H2O = (2S,4S)-4-hydroxy-2,3,4,5-tetrahydrodipicolinate + NADH + H(+). The enzyme catalyses (S)-2,3,4,5-tetrahydrodipicolinate + NADP(+) + H2O = (2S,4S)-4-hydroxy-2,3,4,5-tetrahydrodipicolinate + NADPH + H(+). Its pathway is amino-acid biosynthesis; L-lysine biosynthesis via DAP pathway; (S)-tetrahydrodipicolinate from L-aspartate: step 4/4. Its function is as follows. Catalyzes the conversion of 4-hydroxy-tetrahydrodipicolinate (HTPA) to tetrahydrodipicolinate. The sequence is that of 4-hydroxy-tetrahydrodipicolinate reductase from Methanococcus vannielii (strain ATCC 35089 / DSM 1224 / JCM 13029 / OCM 148 / SB).